A 278-amino-acid chain; its full sequence is MQTLRQQQPIVPSSPGHDPFLIVENVSKIYETPKGPYTVLDGVNLTVQEGEFICVIGHSGCGKSTLLNMVSGFNQPSHGSVRLKGKEIDRPGPDRMVVFQNYALLPWMTAYENVYLAVDCVNPQMREGEKREIVREHLAMVGLTEAAEKKITQISGGMKQRVAIARALSIRPEVLILDEPFGALDAITKEELQEELLKIWNDHRCTVLMITHDIDEALFLADRLVMMTNGPAANIGEIMTIPFPRPRDRERIMEDPQYYDLRNYALDFLYNRFAHDDE.

The ABC transporter domain maps to Leu-21–Glu-254. Residue Gly-57–Ser-64 coordinates ATP.

This sequence belongs to the ABC transporter superfamily. Nitrate/nitrite/cyanate uptake transporter (NitT) (TC 3.A.1.16) family. The complex is composed of two ATP-binding proteins (CmpC and CmpD), a transmembrane protein (CmpB) and a solute-binding protein (CmpA).

Its subcellular location is the cell inner membrane. Part of the ABC transporter complex CmpABCD involved in bicarbonate transport. Responsible for energy coupling to the transport system. The sequence is that of Bicarbonate transport ATP-binding protein CmpD (cmpD) from Synechococcus elongatus (strain ATCC 33912 / PCC 7942 / FACHB-805) (Anacystis nidulans R2).